The primary structure comprises 1748 residues: Tight junction protein 1 (1748 aa).

The 88-residue stretch at 23 to 110 folds into the PDZ 1 domain; the sequence is TVTLHRAPGF…NAKITIRRKK (88 aa). The span at 102–112 shows a compositional bias: basic residues; the sequence is AKITIRRKKKV. Residues 102 to 189 form a disordered region; sequence AKITIRRKKK…QPAKPTKVTL (88 aa). A compositionally biased stretch (acidic residues) spans 123–136; sequence PVSDNEEDSYDEEI. Phosphoserine is present on Ser-125. Residue Tyr-132 is modified to Phosphotyrosine. Positions 149–175 are enriched in basic and acidic residues; it reads RRSEKIWPRDRSASRERSLSPRSDRRS. 3 positions are modified to phosphoserine: Ser-175, Ser-178, and Ser-179. Thr-185 carries the phosphothreonine modification. Residues 186 to 264 form the PDZ 2 domain; the sequence is KVTLVKSRKN…KLKMVVQRDE (79 aa). Ser-212 and Ser-241 each carry phosphoserine. A Phosphothreonine modification is found at Thr-267. 13 positions are modified to phosphoserine: Ser-275, Ser-277, Ser-280, Ser-284, Ser-290, Ser-294, Ser-297, Ser-300, Ser-323, Ser-329, Ser-334, Ser-337, and Ser-353. The segment at 295-396 is disordered; sequence LASDHSGRSH…PVYAQVGQPD (102 aa). The segment covering 299 to 327 has biased composition (basic and acidic residues); the sequence is HSGRSHDRPPRRSRSRSPDQRSEPSDHSR. A compositionally biased stretch (polar residues) spans 329–338; the sequence is SPQQPSNGSL. The residue at position 354 (Thr-354) is a Phosphothreonine. A compositionally biased stretch (basic and acidic residues) spans 357 to 377; it reads KHADDHTPKTVEEVTVERNEK. Positions 421–502 constitute a PDZ 3 domain; sequence SMKLVKFRKG…GEEVTILAQK (82 aa). The 69-residue stretch at 516-584 folds into the SH3 domain; the sequence is GDSFYIRTHF…PNKNRAEQLA (69 aa). Positions 598 to 779 constitute a Guanylate kinase-like domain; it reads RADFWRFRGL…TTTINLNSMN (182 aa). Ser-617 and Ser-622 each carry phosphoserine. Residues 633 to 876 are occludin (OCLN)-binding region; sequence YERVVLREAG…GTPPESAITR (244 aa). Thr-809 carries the phosphothreonine modification. 2 positions are modified to phosphoserine: Ser-810 and Ser-821. At Tyr-822 the chain carries Phosphotyrosine. 3 positions are modified to phosphoserine: Ser-824, Ser-828, and Ser-837. Disordered stretches follow at residues 825–1081 and 1095–1587; these read APGS…LRYE and DDKQ…PEFD. Phosphothreonine occurs at positions 846, 848, 854, 861, and 868. Basic and acidic residues predominate over residues 879-892; that stretch reads EPVREDSSGMHHEN. Over residues 893–906 the composition is skewed to low complexity; the sequence is QTYPPYSPQAQPQP. Phosphoserine is present on Ser-912. 2 stretches are compositionally biased toward polar residues: residues 934–953 and 963–979; these read PETN…NLTN and PSTS…TPST. Ser-968 is subject to Phosphoserine. Residues 998-1014 are compositionally biased toward basic and acidic residues; the sequence is DPTKVYRKDPYPEEMMR. Positions 1061–1072 are enriched in polar residues; sequence YESSSYTDQFSR. 3 positions are modified to phosphoserine: Ser-1071, Ser-1111, and Ser-1139. Basic and acidic residues predominate over residues 1110 to 1125; sequence HSQDLDSRQHPEESSE. Tyr-1140 and Tyr-1165 each carry phosphotyrosine. An actin-binding region (ABR) region spans residues 1151–1371; the sequence is RASALRHEEQ…FDRRSFENKP (221 aa). Basic and acidic residues-rich tracts occupy residues 1269–1286 and 1336–1347; these read KMFE…KDVN and PPEDIVRSNHYD. Tyr-1354 bears the Phosphotyrosine mark. Residue Ser-1366 is modified to Phosphoserine. The span at 1389-1400 shows a compositional bias: low complexity; sequence SQNQSNFSSYSS. A compositionally biased stretch (basic and acidic residues) spans 1403–1420; the sequence is KPPEADGVDRSFGEKRYE. A Phosphoserine modification is found at Ser-1413. Composition is skewed to polar residues over residues 1459-1470 and 1512-1522; these read NSVSLDFQNSLV and GTEQTQKTVTP. The segment covering 1538-1547 has biased composition (basic and acidic residues); that stretch reads PFERKFESPK. Residues Ser-1545 and Ser-1617 each carry the phosphoserine modification. Residues 1634 to 1748 form the ZU5 domain; sequence ATARGIFNSN…NCVSVLIDHF (115 aa).

It belongs to the MAGUK family. As to quaternary structure, homodimer. Forms heterodimers TJP3. Forms a heterodimer (via PDZ2 domain) with TJP2/ZO2 (via PDZ2 domain). Interacts with OCLN, CALM, claudins, CGN/cingulin, CXADR, GJA12, GJD3 and UBN1. Interacts (via ZU5 domain) with CDC42BPB and MYZAP. Interacts (via PDZ domain) with GJA1. Interacts (via PDZ domains) with ANKRD2. Interacts with POPDC1 (via the C-terminus cytoplasmic tail). Interacts with HSPA4 and KIRREL1. Interacts with DLL1. Interacts with USP53 (via the C-terminal region). Interacts (via ABR region) with F-actin. Interacts with DNMBP (via C-terminal domain); required for the apical cell-cell junction localization of DNMBP. Interacts with SPEF1. Interacts (via N-terminus) with CTNNA1. Interacts with CLDN18. Interacts with CLDN16 (via TRV motif); this is a prerequisite for anchoring of CLDN16 at the tight junction. Interacts with PKP1; the interaction facilitates TJP1/ZO-1 localization to the plasma membrane. Interacts with PATJ (via PDZ1-6 domains); the interaction is required for attachment and extension of TJP1/ZO1 condensates along the apical cell interface. In terms of processing, phosphorylated at tyrosine redidues in response to epidermal growth factor (EGF). This response is dependent on an intact actin microfilament system. Dephosphorylated by PTPRJ. As to expression, the alpha-containing isoform is found in most epithelial cell junctions. The short isoform is found both in endothelial cells and the highly specialized epithelial junctions of renal glomeruli and Sertoli cells of the seminiferous tubules.

The protein resides in the cell membrane. It localises to the cell junction. It is found in the tight junction. The protein localises to the gap junction. Its subcellular location is the cell projection. The protein resides in the podosome. Its function is as follows. TJP1, TJP2, and TJP3 are closely related scaffolding proteins that link tight junction (TJ) transmembrane proteins such as claudins, junctional adhesion molecules, and occludin to the actin cytoskeleton. Forms a multistranded TJP1/ZO1 condensate which elongates to form a tight junction belt, the belt is anchored at the apical cell membrane via interaction with PATJ. The tight junction acts to limit movement of substances through the paracellular space and as a boundary between the compositionally distinct apical and basolateral plasma membrane domains of epithelial and endothelial cells. Necessary for lumenogenesis, and particularly efficient epithelial polarization and barrier formation. Plays a role in the regulation of cell migration by targeting CDC42BPB to the leading edge of migrating cells. Plays an important role in podosome formation and associated function, thus regulating cell adhesion and matrix remodeling. With TJP2 and TJP3, participates in the junctional retention and stability of the transcription factor DBPA, but is not involved in its shuttling to the nucleus. May play a role in mediating cell morphology changes during ameloblast differentiation via its role in tight junctions. The sequence is that of Tight junction protein 1 from Homo sapiens (Human).